The primary structure comprises 356 residues: Probable butyrate kinase (356 aa).

This sequence belongs to the acetokinase family.

Its subcellular location is the cytoplasm. The catalysed reaction is butanoate + ATP = butanoyl phosphate + ADP. The polypeptide is Probable butyrate kinase (Clostridium perfringens (strain SM101 / Type A)).